The sequence spans 251 residues: MLTFVGLGLWDVKDISVKGLEAVREADEVYVEYYTSKLLSSIEEMEEFFGKRVVELERSDLEENSFRLIERAKSKSVVLLVPGDPMVATTHSAIKLEAERKGVKTRIIHGASISTAVCGLTGLHNYRFGKSATVSWHRSQTPVNVIKANRSIDAHTLLFLDLHPEPMTIGHAVENLIAEDAQMKDLYAVGIARAGSGEEVVKCDRLENLKKIDFGKPLHVMVVLAKTLHFMEFECLREFADAPAELERLVA.

S-adenosyl-L-methionine contacts are provided by residues Leu-9, Asp-84, Val-87, 112 to 113 (SI), Leu-160, Ala-194, and His-219.

The protein belongs to the diphthine synthase family. As to quaternary structure, homodimer.

It carries out the reaction 2-[(3S)-amino-3-carboxypropyl]-L-histidyl-[translation elongation factor 2] + 3 S-adenosyl-L-methionine = diphthine-[translation elongation factor 2] + 3 S-adenosyl-L-homocysteine + 3 H(+). It functions in the pathway protein modification; peptidyl-diphthamide biosynthesis. Its function is as follows. S-adenosyl-L-methionine-dependent methyltransferase that catalyzes the trimethylation of the amino group of the modified target histidine residue in translation elongation factor 2 (EF-2), to form an intermediate called diphthine. The three successive methylation reactions represent the second step of diphthamide biosynthesis. The sequence is that of Diphthine synthase from Archaeoglobus fulgidus (strain ATCC 49558 / DSM 4304 / JCM 9628 / NBRC 100126 / VC-16).